A 138-amino-acid chain; its full sequence is Large-conductance mechanosensitive channel (138 aa).

The next 2 helical transmembrane spans lie at 19-39 (VGVIIGAAFGAIVTSLVGDVI) and 81-101 (GSFLTLTINFIIIAFVLFLVI).

This sequence belongs to the MscL family. As to quaternary structure, homopentamer.

It is found in the cell inner membrane. Its function is as follows. Channel that opens in response to stretch forces in the membrane lipid bilayer. May participate in the regulation of osmotic pressure changes within the cell. The protein is Large-conductance mechanosensitive channel of Bradyrhizobium diazoefficiens (strain JCM 10833 / BCRC 13528 / IAM 13628 / NBRC 14792 / USDA 110).